Reading from the N-terminus, the 607-residue chain is Chaperone protein DnaK (607 aa).

Thr-173 carries the post-translational modification Phosphothreonine; by autocatalysis. Composition is skewed to basic and acidic residues over residues 490–509 (EQNA…RNEA) and 524–542 (GDNV…KEAL). Disordered regions lie at residues 490 to 510 (EQNA…NEAD), 524 to 555 (GDNV…EDIK), and 574 to 607 (QQAQ…KDNK). Polar residues predominate over residues 574–587 (QQAQQGDAAGSNQS). The span at 595–607 (TEVKDDDDKKDNK) shows a compositional bias: basic and acidic residues.

Belongs to the heat shock protein 70 family.

In terms of biological role, acts as a chaperone. The sequence is that of Chaperone protein DnaK from Staphylococcus carnosus (strain TM300).